Consider the following 397-residue polypeptide: Probable N-succinyldiaminopimelate aminotransferase DapC (397 aa).

Residues glycine 109–serine 110 and aspartate 218–glutamate 222 contribute to the pyridoxal 5'-phosphate site. Lysine 232 carries the post-translational modification N6-(pyridoxal phosphate)lysine.

It belongs to the class-III pyridoxal-phosphate-dependent aminotransferase family. As to quaternary structure, homodimer. Pyridoxal 5'-phosphate is required as a cofactor.

It is found in the cytoplasm. The catalysed reaction is N-succinyl-(2S,6S)-2,6-diaminopimelate + 2-oxoglutarate = (S)-2-succinylamino-6-oxoheptanedioate + L-glutamate. It participates in amino-acid biosynthesis; L-lysine biosynthesis via DAP pathway; LL-2,6-diaminopimelate from (S)-tetrahydrodipicolinate (succinylase route): step 2/3. In terms of biological role, involved in the lysine biosynthetic pathways. It catalyzes the transfer of an amino group from L-glutamate to N-succinyl-2-l-amino-6-oxoheptanedioate (N-succinyl-2-l-amino-6-ketopimelate) in a PLP-dependent reaction, yielding as products N-succinyl-l-2,6-diaminoheptanedioate (N-succinyl-diaminopimelate) and 2-oxoglutarate. The polypeptide is Probable N-succinyldiaminopimelate aminotransferase DapC (dapC) (Mycobacterium tuberculosis (strain CDC 1551 / Oshkosh)).